The chain runs to 308 residues: Glutaminase 2 (308 aa).

The substrate site is built by S66, N117, E161, N168, Y192, Y244, and V262.

It belongs to the glutaminase family. As to quaternary structure, homotetramer.

The enzyme catalyses L-glutamine + H2O = L-glutamate + NH4(+). The polypeptide is Glutaminase 2 (Shigella flexneri).